The primary structure comprises 105 residues: Large ribosomal subunit protein uL24 (105 aa).

The tract at residues 40–61 (RIKKHTPQSANERGASSGGIVT) is disordered.

The protein belongs to the universal ribosomal protein uL24 family. In terms of assembly, part of the 50S ribosomal subunit.

Functionally, one of two assembly initiator proteins, it binds directly to the 5'-end of the 23S rRNA, where it nucleates assembly of the 50S subunit. In terms of biological role, one of the proteins that surrounds the polypeptide exit tunnel on the outside of the subunit. The chain is Large ribosomal subunit protein uL24 from Mycobacteroides abscessus (strain ATCC 19977 / DSM 44196 / CCUG 20993 / CIP 104536 / JCM 13569 / NCTC 13031 / TMC 1543 / L948) (Mycobacterium abscessus).